A 252-amino-acid chain; its full sequence is Geranylgeranylglyceryl phosphate synthase (252 aa).

Mg(2+) is bound by residues aspartate 27 and serine 56. Sn-glycerol 1-phosphate is bound by residues 175 to 181 (YLEAGSG), 206 to 207 (GG), and 228 to 229 (GT).

This sequence belongs to the GGGP/HepGP synthase family. Group II subfamily. Requires Mg(2+) as cofactor.

The protein resides in the cytoplasm. It carries out the reaction sn-glycerol 1-phosphate + (2E,6E,10E)-geranylgeranyl diphosphate = sn-3-O-(geranylgeranyl)glycerol 1-phosphate + diphosphate. It participates in membrane lipid metabolism; glycerophospholipid metabolism. Its function is as follows. Prenyltransferase that catalyzes the transfer of the geranylgeranyl moiety of geranylgeranyl diphosphate (GGPP) to the C3 hydroxyl of sn-glycerol-1-phosphate (G1P). This reaction is the first ether-bond-formation step in the biosynthesis of archaeal membrane lipids. The protein is Geranylgeranylglyceryl phosphate synthase of Pyrococcus abyssi (strain GE5 / Orsay).